Reading from the N-terminus, the 371-residue chain is MPHHYILTLFGLLPVATNISTWWNFGSMLLACLALQVLTGFFLAVHYTANINLAFSSIIHITRDVPYGWMMQNLHAIGASMFFICIYIHIARGLYYGSYLNKETWMSGITLLITLMATAFFGYVLPWGQMSFWAATVITNLLTAVPYLGTTLTTWLWGGFAINDPTLTRFFALHFILPFAIISMSSLHIILLHEEGSSNPLGTNPDIDKIPFHPYHSYKDLLFLTLMILFMLIIVSFFPDIFNDPDNFSKANPLVTPQHIKPEWYFLFAYGILRSIPNKLGGALALVMSIMILFIIPFTHTAHFRPMTFRPLSQLMFWTLVSTFITITWAATKPVEPPYIIISQVTATLYFIFFISMPLLGWIENKMTNTP.

4 helical membrane passes run 25–45 (FGSMLLACLALQVLTGFFLAV), 69–90 (WMMQNLHAIGASMFFICIYIHI), 105–125 (WMSGITLLITLMATAFFGYVL), and 170–190 (FFALHFILPFAIISMSSLHII). H75 and H89 together coordinate heme b. The heme b site is built by H174 and H188. H193 is a binding site for a ubiquinone. The next 4 membrane-spanning stretches (helical) occupy residues 218-238 (YKDLLFLTLMILFMLIIVSFF), 280-300 (LGGALALVMSIMILFIIPFTH), 312-332 (LSQLMFWTLVSTFITITWAAT), and 339-358 (YIIISQVTATLYFIFFISMP).

Belongs to the cytochrome b family. As to quaternary structure, the cytochrome bc1 complex contains 3 respiratory subunits (MT-CYB, CYC1 and UQCRFS1), 2 core proteins (UQCRC1 and UQCRC2) and probably 6 low-molecular weight proteins. Heme b is required as a cofactor.

Its subcellular location is the mitochondrion inner membrane. Component of the ubiquinol-cytochrome c reductase complex (complex III or cytochrome b-c1 complex) that is part of the mitochondrial respiratory chain. The b-c1 complex mediates electron transfer from ubiquinol to cytochrome c. Contributes to the generation of a proton gradient across the mitochondrial membrane that is then used for ATP synthesis. In Python molurus (Indian python), this protein is Cytochrome b (MT-CYB).